Consider the following 365-residue polypeptide: Mitogen-activated protein kinase HOG1 (365 aa).

Residues 20-306 enclose the Protein kinase domain; sequence YSDLQPVGMG…ATNALAHEYL (287 aa). ATP contacts are provided by residues 26–34 and Lys49; that span reads VGMGAFGLV. Asp148 serves as the catalytic Proton acceptor. A TXY motif is present at residues 178-180; it reads TGY.

It belongs to the protein kinase superfamily. Ser/Thr protein kinase family. MAP kinase subfamily. HOG1 sub-subfamily. Mg(2+) serves as cofactor.

It localises to the cytoplasm. The protein localises to the nucleus. It catalyses the reaction L-seryl-[protein] + ATP = O-phospho-L-seryl-[protein] + ADP + H(+). It carries out the reaction L-threonyl-[protein] + ATP = O-phospho-L-threonyl-[protein] + ADP + H(+). In terms of biological role, proline-directed serine/threonine-protein kinase involved in a signal transduction pathway that is activated by changes in the osmolarity of the extracellular environment. Controls osmotic regulation of transcription of target genes. Involved in environmental stress response, hyphal growth, conidiation and possibly secondary metabolism such as ustiloxin biosynthesis or the biosynthesis of other phytotoxic compounds that are inhibitory to rice shoot growth during seed germination. Plays a key role in responses to cell wall and membrane stresses but not oxidative stress. The sequence is that of Mitogen-activated protein kinase HOG1 from Ustilaginoidea virens (Rice false smut fungus).